The chain runs to 62 residues: Alpha-conotoxin-like Ca1.1 (62 aa).

A signal peptide spans 1 to 21 (MGMRMMFTVFLLVVLATTVVS). A propeptide spanning residues 22–46 (FTSDRASDGRNAAANAFDLIALIAR) is cleaved from the precursor. The residue at position 47 (Gln47) is a Pyrrolidone carboxylic acid. 2 disulfide bridges follow: Cys49-Cys55 and Cys50-Cys61.

The protein belongs to the conotoxin A superfamily. Expressed by the venom duct.

The protein resides in the secreted. Functionally, alpha-conotoxins act on postsynaptic membranes, they bind to the nicotinic acetylcholine receptors (nAChR) and thus inhibit them. The protein is Alpha-conotoxin-like Ca1.1 of Conus caracteristicus (Characteristic cone).